Consider the following 853-residue polypeptide: DNA mismatch repair protein MutS (853 aa).

614–621 (GPNMGGKS) lines the ATP pocket.

This sequence belongs to the DNA mismatch repair MutS family.

Its function is as follows. This protein is involved in the repair of mismatches in DNA. It is possible that it carries out the mismatch recognition step. This protein has a weak ATPase activity. The chain is DNA mismatch repair protein MutS from Escherichia coli O6:H1 (strain CFT073 / ATCC 700928 / UPEC).